A 333-amino-acid chain; its full sequence is MALPDYSMRQLLEAGVHFGHQSHRWNPKMSQYIFGVRNNIHIIDLSQTVPALHRALQAVSDTVAQGGRVLFVGTKRQAQDQVADAARRSAQYYVNSRWLGGMLTNWKTISNSIARLKKLEEMLSGPEQGGYTKKERLTLSREKEKLERALGGIRDMGGLPDLLFVIDTNKEDIAVKEAQRLGIPVAAILDTNSDPDGITYPVPGNDDAGRAIQLYCDLVARAAIDGIGRGHVDLGVDLGETEAPLSEGLPAEPSLWSTFEPLSGPRGVADDLKKLTGVSPEIEQKLNDLGVFHFSQIAGLDSVDAQRVGEEVGLPGRVDGWIAQAKEFSAEAE.

This sequence belongs to the universal ribosomal protein uS2 family.

This Azorhizobium caulinodans (strain ATCC 43989 / DSM 5975 / JCM 20966 / LMG 6465 / NBRC 14845 / NCIMB 13405 / ORS 571) protein is Small ribosomal subunit protein uS2.